Consider the following 77-residue polypeptide: Acyl carrier protein (77 aa).

The Carrier domain maps to 1–76 (MADFEKIKSI…DVIKFIDKLK (76 aa)). Position 36 is an O-(pantetheine 4'-phosphoryl)serine (Ser36).

This sequence belongs to the acyl carrier protein (ACP) family. 4'-phosphopantetheine is transferred from CoA to a specific serine of apo-ACP by AcpS. This modification is essential for activity because fatty acids are bound in thioester linkage to the sulfhydryl of the prosthetic group.

It is found in the cytoplasm. Its pathway is lipid metabolism; fatty acid biosynthesis. In terms of biological role, carrier of the growing fatty acid chain in fatty acid biosynthesis. The polypeptide is Acyl carrier protein (Leptospira biflexa serovar Patoc (strain Patoc 1 / Ames)).